A 439-amino-acid chain; its full sequence is tRNA modification GTPase MnmE (439 aa).

(6S)-5-formyl-5,6,7,8-tetrahydrofolate contacts are provided by R24, E81, and K121. Residues 218 to 363 (GFKVVIAGAP…LRDLIGRVVK (146 aa)) enclose the TrmE-type G domain. K(+) is bound at residue N228. GTP is bound by residues 228 to 233 (NAGKSS), 247 to 253 (TDIAGTT), and 272 to 275 (DTAG). S232 is a binding site for Mg(2+). Positions 247, 249, and 252 each coordinate K(+). T253 provides a ligand contact to Mg(2+). K439 is a (6S)-5-formyl-5,6,7,8-tetrahydrofolate binding site.

It belongs to the TRAFAC class TrmE-Era-EngA-EngB-Septin-like GTPase superfamily. TrmE GTPase family. In terms of assembly, homodimer. Heterotetramer of two MnmE and two MnmG subunits. Requires K(+) as cofactor.

It localises to the cytoplasm. Functionally, exhibits a very high intrinsic GTPase hydrolysis rate. Involved in the addition of a carboxymethylaminomethyl (cmnm) group at the wobble position (U34) of certain tRNAs, forming tRNA-cmnm(5)s(2)U34. The protein is tRNA modification GTPase MnmE of Rhizobium etli (strain CIAT 652).